The primary structure comprises 222 residues: S-crystallin SL20-1 (222 aa).

Positions 2 to 80 constitute a GST N-terminal domain; sequence PNYTLYYFNG…YLARENGYYG (79 aa). Residues 82 to 222 enclose the GST C-terminal domain; that stretch reads NNMDMFRIDY…YLKKRNNTNW (141 aa).

It belongs to the GST superfamily. As to expression, lens.

Its function is as follows. S-crystallins are structural components of squids and octopi eye lens. Contains relatively little if any GST activity. This chain is S-crystallin SL20-1, found in Nototodarus sloanii (Wellington flying squid).